The following is a 91-amino-acid chain: MAELNVEIVSEERSIWSGAASAVSARTVNGEIGILPGHTPMLAVLGDGEVVVRTTDGGTVTAQAHGGFFSVDHDRVVIAATSARLGDAAAA.

This sequence belongs to the ATPase epsilon chain family. F-type ATPases have 2 components, CF(1) - the catalytic core - and CF(0) - the membrane proton channel. CF(1) has five subunits: alpha(3), beta(3), gamma(1), delta(1), epsilon(1). CF(0) has three main subunits: a, b and c.

Its subcellular location is the cell membrane. Functionally, produces ATP from ADP in the presence of a proton gradient across the membrane. The polypeptide is ATP synthase epsilon chain (atpC) (Micrococcus luteus (strain ATCC 4698 / DSM 20030 / JCM 1464 / CCM 169 / CCUG 5858 / IAM 1056 / NBRC 3333 / NCIMB 9278 / NCTC 2665 / VKM Ac-2230) (Micrococcus lysodeikticus)).